We begin with the raw amino-acid sequence, 321 residues long: Protoheme IX farnesyltransferase (321 aa).

A run of 10 helical transmembrane segments spans residues valine 28 to histidine 48, proline 49 to leucine 69, valine 94 to leucine 114, isoleucine 116 to isoleucine 136, isoleucine 149 to glycine 169, phenylalanine 176 to glycine 196, isoleucine 222 to alanine 242, glycine 247 to valine 267, alanine 277 to valine 297, and leucine 300 to phenylalanine 320.

It belongs to the UbiA prenyltransferase family. Protoheme IX farnesyltransferase subfamily.

It localises to the cell inner membrane. It catalyses the reaction heme b + (2E,6E)-farnesyl diphosphate + H2O = Fe(II)-heme o + diphosphate. The protein operates within porphyrin-containing compound metabolism; heme O biosynthesis; heme O from protoheme: step 1/1. Its function is as follows. Converts heme B (protoheme IX) to heme O by substitution of the vinyl group on carbon 2 of heme B porphyrin ring with a hydroxyethyl farnesyl side group. The chain is Protoheme IX farnesyltransferase from Beijerinckia indica subsp. indica (strain ATCC 9039 / DSM 1715 / NCIMB 8712).